We begin with the raw amino-acid sequence, 452 residues long: Cobyrinate a,c-diamide synthase (452 aa).

A GATase cobBQ-type domain is found at 244-437; it reads KIAYAYDEAF…VHINLYTYKE (194 aa). The active-site Nucleophile is the Cys327.

Belongs to the CobB/CbiA family. It depends on Mg(2+) as a cofactor.

The enzyme catalyses cob(II)yrinate + 2 L-glutamine + 2 ATP + 2 H2O = cob(II)yrinate a,c diamide + 2 L-glutamate + 2 ADP + 2 phosphate + 2 H(+). It functions in the pathway cofactor biosynthesis; adenosylcobalamin biosynthesis; cob(II)yrinate a,c-diamide from sirohydrochlorin (anaerobic route): step 10/10. Functionally, catalyzes the ATP-dependent amidation of the two carboxylate groups at positions a and c of cobyrinate, using either L-glutamine or ammonia as the nitrogen source. This is Cobyrinate a,c-diamide synthase from Caldanaerobacter subterraneus subsp. tengcongensis (strain DSM 15242 / JCM 11007 / NBRC 100824 / MB4) (Thermoanaerobacter tengcongensis).